A 142-amino-acid chain; its full sequence is Transcriptional regulator MraZ (142 aa).

SpoVT-AbrB domains follow at residues 5 to 47 (EYPY…PLAS) and 76 to 119 (ANKA…NPER).

Belongs to the MraZ family. Forms oligomers.

The protein localises to the cytoplasm. The protein resides in the nucleoid. The sequence is that of Transcriptional regulator MraZ from Deinococcus geothermalis (strain DSM 11300 / CIP 105573 / AG-3a).